The sequence spans 265 residues: Shikimate dehydrogenase (NADP(+)) (265 aa).

Residues 15 to 17 (SLS) and T62 each bind shikimate. The active-site Proton acceptor is K66. Positions 87 and 102 each coordinate shikimate. Residues 125-129 (GAGGA), 149-154 (NRTLEK), and L209 contribute to the NADP(+) site. Shikimate is bound at residue Y211. Position 233 (G233) interacts with NADP(+).

Belongs to the shikimate dehydrogenase family. In terms of assembly, homodimer.

The catalysed reaction is shikimate + NADP(+) = 3-dehydroshikimate + NADPH + H(+). It participates in metabolic intermediate biosynthesis; chorismate biosynthesis; chorismate from D-erythrose 4-phosphate and phosphoenolpyruvate: step 4/7. In terms of biological role, involved in the biosynthesis of the chorismate, which leads to the biosynthesis of aromatic amino acids. Catalyzes the reversible NADPH linked reduction of 3-dehydroshikimate (DHSA) to yield shikimate (SA). The protein is Shikimate dehydrogenase (NADP(+)) of Legionella pneumophila (strain Corby).